The following is a 342-amino-acid chain: Anthranilate phosphoribosyltransferase (342 aa).

Residues G83, 86–87 (GD), T91, 93–96 (NIST), 111–119 (KHGGRSVSS), and A123 each bind 5-phospho-alpha-D-ribose 1-diphosphate. G83 serves as a coordination point for anthranilate. S95 serves as a coordination point for Mg(2+). R169 contacts anthranilate. D228 and E229 together coordinate Mg(2+).

The protein belongs to the anthranilate phosphoribosyltransferase family. Homodimer. It depends on Mg(2+) as a cofactor.

The catalysed reaction is N-(5-phospho-beta-D-ribosyl)anthranilate + diphosphate = 5-phospho-alpha-D-ribose 1-diphosphate + anthranilate. It participates in amino-acid biosynthesis; L-tryptophan biosynthesis; L-tryptophan from chorismate: step 2/5. In terms of biological role, catalyzes the transfer of the phosphoribosyl group of 5-phosphorylribose-1-pyrophosphate (PRPP) to anthranilate to yield N-(5'-phosphoribosyl)-anthranilate (PRA). This is Anthranilate phosphoribosyltransferase from Neisseria gonorrhoeae (strain ATCC 700825 / FA 1090).